The chain runs to 236 residues: 7-cyano-7-deazaguanine synthase (236 aa).

Residue 12-22 coordinates ATP; sequence FSGGQDSTTCL. Residues Cys200, Cys215, Cys218, and Cys221 each coordinate Zn(2+).

It belongs to the QueC family. Requires Zn(2+) as cofactor.

The enzyme catalyses 7-carboxy-7-deazaguanine + NH4(+) + ATP = 7-cyano-7-deazaguanine + ADP + phosphate + H2O + H(+). It participates in purine metabolism; 7-cyano-7-deazaguanine biosynthesis. Catalyzes the ATP-dependent conversion of 7-carboxy-7-deazaguanine (CDG) to 7-cyano-7-deazaguanine (preQ(0)). This chain is 7-cyano-7-deazaguanine synthase, found in Bradyrhizobium sp. (strain ORS 278).